The sequence spans 906 residues: Disintegrin and metalloproteinase domain-containing protein 22 (906 aa).

A signal peptide spans 1 to 25 (MQAAVAVSVPFLLLCVLGTCPPARC). A propeptide spanning residues 26 to 222 (GQAGDASLME…KFILKPRPKR (197 aa)) is cleaved from the precursor. An N-linked (GlcNAc...) asparagine glycan is attached at Asn-175. Topologically, residues 223-736 (SKRQLRRYPR…LSGNGVAGTN (514 aa)) are extracellular. Residues 239–438 (KYIELMIVND…GGGACLFNKP (200 aa)) enclose the Peptidase M12B domain. Disulfide bonds link Cys-349-Cys-433, Cys-392-Cys-417, Cys-394-Cys-401, Cys-447-Cys-477, Cys-458-Cys-474, Cys-460-Cys-466, Cys-473-Cys-494, Cys-485-Cys-491, Cys-490-Cys-516, Cys-503-Cys-523, Cys-510-Cys-542, Cys-535-Cys-547, Cys-554-Cys-605, Cys-569-Cys-635, Cys-583-Cys-593, Cys-600-Cys-663, and Cys-657-Cys-668. A Disintegrin domain is found at 444 to 531 (PPECGNGFIE…QCAPNIHKMD (88 aa)). Asn-519 carries N-linked (GlcNAc...) asparagine glycosylation. Asn-634 carries an N-linked (GlcNAc...) asparagine glycan. An N-linked (GlcNAc...) asparagine glycan is attached at Asn-675. The EGF-like domain occupies 675-712 (NFSTCLSSKEGTICSGNGVCSNELKCVCNRHWIGSDCN). 3 disulfides stabilise this stretch: Cys-679–Cys-694, Cys-688–Cys-700, and Cys-702–Cys-711. The helical transmembrane segment at 737 to 757 (IIIGIIAGTILVLALILGITA) threads the bilayer. At 758-906 (WGYKNYREQR…QSARLWETSI (149 aa)) the chain is on the cytoplasmic side. Positions 785–906 (YSDIPPGVST…QSARLWETSI (122 aa)) are disordered. Residues 793–810 (STNSASSSKKRSNGLSHS) show a composition bias toward low complexity. The residue at position 810 (Ser-810) is a Phosphoserine. Basic and acidic residues predominate over residues 811–829 (WSERIPDTKHISDICENGR). Ser-834 is subject to Phosphoserine. Residues 842–853 (NKKKIRGKRFRP) are compositionally biased toward basic residues. Phosphoserine is present on residues Ser-857, Ser-862, Ser-866, and Ser-870. Over residues 862–877 (SPAKSPSSSTGSIASS) the composition is skewed to low complexity.

Interacts with LGI1. Interacts with DLG4/PSD95. Also binds LGI4. Interacts with KCNA2 and DLG2. Interacts with ADAM11. Interacts (via C-terminus) with YWHAB/14-3-3 beta. Interacts (via C-terminus) with YWHAZ/14-3-3 zeta. The precursor is cleaved by a furin endopeptidase. Highly expressed in the brain and in some high-grade but not low-grade gliomas. Detected slightly or not at all in other tissues.

It localises to the cell membrane. The protein localises to the cell projection. It is found in the axon. Its function is as follows. Probable ligand for integrin in the brain. This is a non catalytic metalloprotease-like protein. Involved in regulation of cell adhesion and spreading and in inhibition of cell proliferation. Neuronal receptor for LGI1. This Homo sapiens (Human) protein is Disintegrin and metalloproteinase domain-containing protein 22 (ADAM22).